A 513-amino-acid chain; its full sequence is Activin receptor type-2B (513 aa).

Positions 1–18 (MTAPWAALALLWGSLCAG) are cleaved as a signal peptide. The Extracellular segment spans residues 19 to 137 (SGRGEAETRE…PPPTAPTLLT (119 aa)). 5 disulfides stabilise this stretch: cysteine 29–cysteine 59, cysteine 49–cysteine 77, cysteine 84–cysteine 103, cysteine 90–cysteine 102, and cysteine 104–cysteine 109. N-linked (GlcNAc...) asparagine glycosylation is found at asparagine 42 and asparagine 65. Residues 138 to 158 (VLAYSLLPIGGLSLIVLLAFW) form a helical membrane-spanning segment. Residues 159–513 (MYRHRKPPYG…VDLLPKESSI (355 aa)) are Cytoplasmic-facing. The Protein kinase domain occupies 190-481 (LQLLEIKARG…AGCVEERVSL (292 aa)). ATP-binding positions include 196–204 (KARGRFGCV) and lysine 217. The active-site Proton acceptor is the aspartate 322. The tract at residues 492–513 (DCLVSLVTSVTNVDLLPKESSI) is interaction with DYNLT1.

It belongs to the protein kinase superfamily. TKL Ser/Thr protein kinase family. TGFB receptor subfamily. As to quaternary structure, forms an activin receptor complex with activin type II receptors such as ACVR1B. Interacts with VPS39. Interacts with DYNLT1. Interacts with BMP3. Interacts with BMP2. Requires Mg(2+) as cofactor. Mn(2+) serves as cofactor. In terms of processing, phosphorylated. Constitutive phosphorylation is in part catalyzed by its own kinase activity.

Its subcellular location is the cell membrane. It catalyses the reaction L-threonyl-[receptor-protein] + ATP = O-phospho-L-threonyl-[receptor-protein] + ADP + H(+). The catalysed reaction is L-seryl-[receptor-protein] + ATP = O-phospho-L-seryl-[receptor-protein] + ADP + H(+). In terms of biological role, transmembrane serine/threonine kinase activin type-2 receptor forming an activin receptor complex with activin type-1 serine/threonine kinase receptors (ACVR1, ACVR1B or ACVR1c). Transduces the activin signal from the cell surface to the cytoplasm and is thus regulating many physiological and pathological processes including neuronal differentiation and neuronal survival, hair follicle development and cycling, FSH production by the pituitary gland, wound healing, extracellular matrix production, immunosuppression and carcinogenesis. Activin is also thought to have a paracrine or autocrine role in follicular development in the ovary. Within the receptor complex, the type-2 receptors act as a primary activin receptors (binds activin-A/INHBA, activin-B/INHBB as well as inhibin-A/INHA-INHBA). The type-1 receptors like ACVR1B act as downstream transducers of activin signals. Activin binds to type-2 receptor at the plasma membrane and activates its serine-threonine kinase. The activated receptor type-2 then phosphorylates and activates the type-1 receptor. Once activated, the type-1 receptor binds and phosphorylates the SMAD proteins SMAD2 and SMAD3, on serine residues of the C-terminal tail. Soon after their association with the activin receptor and subsequent phosphorylation, SMAD2 and SMAD3 are released into the cytoplasm where they interact with the common partner SMAD4. This SMAD complex translocates into the nucleus where it mediates activin-induced transcription. Inhibitory SMAD7, which is recruited to ACVR1B through FKBP1A, can prevent the association of SMAD2 and SMAD3 with the activin receptor complex, thereby blocking the activin signal. Activin signal transduction is also antagonized by the binding to the receptor of inhibin-B via the IGSF1 inhibin coreceptor. This Rattus norvegicus (Rat) protein is Activin receptor type-2B (Acvr2b).